Here is a 191-residue protein sequence, read N- to C-terminus: MELDVFAGQEKSELSMIEVARAILETRGRDKEMYFNDLVNEIQNYLEKSDADIRSALPFFYSDLNTDGSFIPLGDNKWGLRSWYAIDEIDEEVITLEDIDENAPKRKNKKVNAFMDGDEDAIDYNDDDPEDENFTPSSAILEYDNDNEDDENAEVESYDSELNEIIPDDDLDDVELSEEDDDDDYEDETND.

The HTH HARE-type domain maps to 14–83 (LSMIEVARAI…GDNKWGLRSW (70 aa)). 2 stretches are compositionally biased toward acidic residues: residues 119-133 (EDAI…EDEN) and 143-191 (YDND…ETND). The interval 119–191 (EDAIDYNDDD…DDDYEDETND (73 aa)) is disordered.

This sequence belongs to the RpoE family. As to quaternary structure, RNAP is composed of a core of 2 alpha, a beta and a beta' subunits. The core is associated with a delta subunit and one of several sigma factors.

In terms of biological role, participates in both the initiation and recycling phases of transcription. In the presence of the delta subunit, RNAP displays an increased specificity of transcription, a decreased affinity for nucleic acids, and an increased efficiency of RNA synthesis because of enhanced recycling. This chain is Probable DNA-directed RNA polymerase subunit delta, found in Streptococcus thermophilus (strain ATCC BAA-491 / LMD-9).